Here is a 1213-residue protein sequence, read N- to C-terminus: SWI/SNF complex subunit SMARCC2 (1213 aa).

The tract at residues 1–274 (MAVRKKDGGP…PVSRRKKISA (274 aa)) is marR-like, BRCT and chromo domains module. Residues 10 to 136 (PNVKYYEAAD…IEKSLVQNNC (127 aa)) enclose the MarR-like domain. Residues 140–183 (PNIFLCPEIEPKLLGKLKDIVKRHQGTISEDKSNASHVVYPVPG) enclose the BRCT; N-terminus domain. The Chromo domain maps to 189 to 217 (EWVRPVMKRDKQVLLHWGYYPDSYDTWIP). Residues 233-257 (KPRKVHAKWILDTDTFNEWMNEEDY) form the BRCT; C-terminus domain. Residues 256-413 (DYEVSDDKSP…GEQTKNPDLH (158 aa)) are disordered. Residues 275 to 284 (KTLTDEVNSP) are compositionally biased toward polar residues. A phosphoserine mark is found at serine 283, serine 286, serine 302, serine 304, and serine 306. At lysine 312 the chain carries N6-(ADP-ribosyl)lysine. Lysine 326 is modified (N6-acetyllysine). Residues 331–344 (HREEEQEDLTKDMD) are compositionally biased toward basic and acidic residues. Phosphoserine is present on residues serine 347 and serine 387. Residues 379 to 398 (DLDEQDDESMETTGKDEDEN) show a composition bias toward acidic residues. Residues 424–521 (IIIPSYAAWF…YQVDAESRPT (98 aa)) form the SWIRM domain. Residues lysine 564, lysine 566, lysine 568, and lysine 592 each participate in a glycyl lysine isopeptide (Lys-Gly) (interchain with G-Cter in SUMO2) cross-link. Residues 596 to 647 (SATREWTEQETLLLLEALEMYKDDWNKVSEHVGSRTQDECILHFLRLPIEDP) form the SANT domain. A Glycyl lysine isopeptide (Lys-Gly) (interchain with G-Cter in SUMO2) cross-link involves residue lysine 704. A disordered region spans residues 724 to 848 (KVTGKADPAF…AEPEGERKTK (125 aa)). Residues 747–777 (EPERIEESGTEEARPEGQAADEKKEPKEPRE) show a composition bias toward basic and acidic residues. Residue lysine 787 forms a Glycyl lysine isopeptide (Lys-Gly) (interchain with G-Cter in SUMO2) linkage. Positions 788–848 (EEISEVPKKD…AEPEGERKTK (61 aa)) are enriched in basic and acidic residues. Serine 813 is subject to Phosphoserine. Lysine 848 participates in a covalent cross-link: Glycyl lysine isopeptide (Lys-Gly) (interchain with G-Cter in SUMO2). The stretch at 907–934 (EELETIMDREREALEYQRQQLLADRQAF) forms a coiled coil. 2 disordered regions span residues 947–1073 (RQQH…HPGV) and 1181–1213 (LPSASPLPDPGTPLPPDPTAPSPGTVTPVPPPQ). A compositionally biased stretch (low complexity) spans 949 to 962 (QHFQQMHQQQQQQP). Residues 963–974 (PTLPPGSQPIPP) are compositionally biased toward pro residues. Positions 975-1033 (TGAAGPPTVHGLAVPPAAVASAPPGSGAPPGSLGPSEQIGQAGTTAGPQQPQQAGAPQP) are enriched in low complexity. Composition is skewed to pro residues over residues 1034 to 1060 (GAVPPGVPPPGPHGPSPFPNQPTPPSM) and 1185 to 1201 (SPLPDPGTPLPPDPTAP).

Belongs to the SMARCC family. Component of the multiprotein chromatin-remodeling complexes SWI/SNF: SWI/SNF-A (BAF), SWI/SNF-B (PBAF) and related complexes. The canonical complex contains a catalytic subunit (either SMARCA4/BRG1/BAF190A or SMARCA2/BRM/BAF190B) and at least SMARCE1, ACTL6A/BAF53, SMARCC1/BAF155, SMARCC2/BAF170, and SMARCB1/SNF5/BAF47. Other subunits specific to each of the complexes may also be present permitting several possible combinations developmentally and tissue specific. Component of the BAF complex, which includes at least actin (ACTB), ARID1A/BAF250A, ARID1B/BAF250B, SMARCA2/BRM, SMARCA4/BRG1, ACTL6A/BAF53, ACTL6B/BAF53B, SMARCE1/BAF57, SMARCC1/BAF155, SMARCC2/BAF170, SMARCB1/SNF5/INI1, and one or more SMARCD1/BAF60A, SMARCD2/BAF60B, or SMARCD3/BAF60C. In muscle cells, the BAF complex also contains DPF3. Component of neural progenitors-specific chromatin remodeling complex (npBAF complex) composed of at least, ARID1A/BAF250A or ARID1B/BAF250B, SMARCD1/BAF60A, SMARCD3/BAF60C, SMARCA2/BRM/BAF190B, SMARCA4/BRG1/BAF190A, SMARCB1/BAF47, SMARCC1/BAF155, SMARCE1/BAF57, SMARCC2/BAF170, PHF10/BAF45A, ACTL6A/BAF53A and actin. Component of neuron-specific chromatin remodeling complex (nBAF complex) composed of at least, ARID1A/BAF250A or ARID1B/BAF250B, SMARCD1/BAF60A, SMARCD3/BAF60C, SMARCA2/BRM/BAF190B, SMARCA4/BRG1/BAF190A, SMARCB1/BAF47, SMARCC1/BAF155, SMARCE1/BAF57, SMARCC2/BAF170, DPF1/BAF45B, DPF3/BAF45C, ACTL6B/BAF53B and actin. Component of the SWI/SNF-B (PBAF) chromatin remodeling complex, at least composed of SMARCA4/BRG1, SMARCB1/BAF47/SNF5, ACTL6A/BAF53A or ACTL6B/BAF53B, SMARCE1/BAF57, SMARCD1/BAF60A, SMARCD2/BAF60B, perhaps SMARCD3/BAF60C, SMARCC1/BAF155, SMARCC2/BAF170, PBRM1/BAF180, ARID2/BAF200 and actin. May also interact with the SIN3A histone deacetylase transcription repressor complex in conjunction with SMARCA2 and SMARCA4. Interacts with SMARD1. Interacts with KDM6B. Interaction with RCOR1. Interacts with DPF2. Interacts with ERCC6. Interacts with FOS. Mono-ADP-ribosylation at Lys-312 by SIRT6 promotes recruitment to the enhancer region of the Heme oxygenase-1 (HO-1) locus, leading to transcription activation of the locus.

It is found in the nucleus. Involved in transcriptional activation and repression of select genes by chromatin remodeling (alteration of DNA-nucleosome topology). Component of SWI/SNF chromatin remodeling complexes that carry out key enzymatic activities, changing chromatin structure by altering DNA-histone contacts within a nucleosome in an ATP-dependent manner. Can stimulate the ATPase activity of the catalytic subunit of these complexes. May be required for CoREST dependent repression of neuronal specific gene promoters in non-neuronal cells. Belongs to the neural progenitors-specific chromatin remodeling complex (npBAF complex) and the neuron-specific chromatin remodeling complex (nBAF complex). During neural development a switch from a stem/progenitor to a postmitotic chromatin remodeling mechanism occurs as neurons exit the cell cycle and become committed to their adult state. The transition from proliferating neural stem/progenitor cells to postmitotic neurons requires a switch in subunit composition of the npBAF and nBAF complexes. As neural progenitors exit mitosis and differentiate into neurons, npBAF complexes which contain ACTL6A/BAF53A and PHF10/BAF45A, are exchanged for homologous alternative ACTL6B/BAF53B and DPF1/BAF45B or DPF3/BAF45C subunits in neuron-specific complexes (nBAF). The npBAF complex is essential for the self-renewal/proliferative capacity of the multipotent neural stem cells. The nBAF complex along with CREST plays a role regulating the activity of genes essential for dendrite growth. Critical regulator of myeloid differentiation, controlling granulocytopoiesis and the expression of genes involved in neutrophil granule formation. This Mus musculus (Mouse) protein is SWI/SNF complex subunit SMARCC2 (Smarcc2).